Consider the following 362-residue polypeptide: E3 ubiquitin-protein ligase TM129 (362 aa).

Topologically, residues 1–6 (MESPEV) are lumenal. Residues 7–27 (TFTLAYVVFSVCFVFTPNEFH) traverse the membrane as a helical segment. Topologically, residues 28–56 (SAGITVQNLLSGWLGSEDVAFVHYHIRRS) are cytoplasmic. Residues 57-77 (TATLLTHSLLPMGYFIGMCFA) form a helical membrane-spanning segment. At 78–94 (APEKELYNVYKAADGWK) the chain is on the lumenal side. A helical membrane pass occupies residues 95–115 (VFVLITVLLPVTTSILAFYWS). The Cytoplasmic segment spans residues 116-362 (QKRWGNHPLA…FCIVDVCIVR (247 aa)). Residues 285–350 (CIGCMQTNAN…SSHVPCPTCR (66 aa)) form an RING-type; degenerate zinc finger.

Belongs to the TMEM129 family. In terms of assembly, integral component of ER-resident dislocation complexes.

It is found in the endoplasmic reticulum membrane. It catalyses the reaction S-ubiquitinyl-[E2 ubiquitin-conjugating enzyme]-L-cysteine + [acceptor protein]-L-lysine = [E2 ubiquitin-conjugating enzyme]-L-cysteine + N(6)-ubiquitinyl-[acceptor protein]-L-lysine.. It participates in protein modification; protein ubiquitination. Functionally, E3 ubiquitin-protein ligase involved in ER-associated protein degradation, preferentially associates with the E2 enzyme UBE2J2. This Xenopus tropicalis (Western clawed frog) protein is E3 ubiquitin-protein ligase TM129 (tmem129).